Reading from the N-terminus, the 134-residue chain is DNA-binding protein inhibitor ID-2 (134 aa).

2 positions are modified to phosphoserine: Ser14 and Ser25. The bHLH domain maps to 23–75 (SRSKTPVDDPMSLLYNMNDCYSKLKELVPSIPQNKKVTKMEILQHVIDYILDL). The tract at residues 30–83 (DDPMSLLYNMNDCYSKLKELVPSIPQNKKVTKMEILQHVIDYILDLQIALDSHP) is interaction with IFI204. The Nuclear export signal motif lies at 106-115 (LNTDISILSL).

Interacts with GATA4 and NKX2-5. Interacts with NR0B2. Interacts with CLOCK and BMAL1. Interacts with IFI204. Interacts with NEDD9/HEF1. Interacts with ASB4; this interaction promotes ID2 proteasomal degradation. Polyubiquitinated; which is favored by Ifi204 and leads to proteasomal degradation. Ubiquitinated in a ASB4-depedent manner, leading to proteasomal degradation. Post-translationally, phosphorylated in vitro by CDK1, PKA and PKC.

The protein resides in the cytoplasm. It localises to the nucleus. In terms of biological role, transcriptional regulator (lacking a basic DNA binding domain) which negatively regulates the basic helix-loop-helix (bHLH) transcription factors by forming heterodimers and inhibiting their DNA binding and transcriptional activity. Implicated in regulating a variety of cellular processes, including cellular growth, senescence, differentiation, apoptosis, angiogenesis, and neoplastic transformation. Inhibits skeletal muscle and cardiac myocyte differentiation. Regulates the circadian clock by repressing the transcriptional activator activity of the CLOCK-BMAL1 heterodimer. Restricts the CLOCK and BMAL1 localization to the cytoplasm. Plays a role in both the input and output pathways of the circadian clock: in the input component, is involved in modulating the magnitude of photic entrainment and in the output component, contributes to the regulation of a variety of liver clock-controlled genes involved in lipid metabolism. The chain is DNA-binding protein inhibitor ID-2 (Id2) from Mus musculus (Mouse).